A 212-amino-acid chain; its full sequence is Large ribosomal subunit protein uL3 (212 aa).

The interval 130–158 (KRGSMTHGSKNHRLPGSTGAGTTPGRVYP) is disordered.

The protein belongs to the universal ribosomal protein uL3 family. Part of the 50S ribosomal subunit. Forms a cluster with proteins L14 and L19.

Its function is as follows. One of the primary rRNA binding proteins, it binds directly near the 3'-end of the 23S rRNA, where it nucleates assembly of the 50S subunit. This Gloeothece citriformis (strain PCC 7424) (Cyanothece sp. (strain PCC 7424)) protein is Large ribosomal subunit protein uL3.